A 58-amino-acid polypeptide reads, in one-letter code: Small ribosomal subunit protein bS21 (58 aa).

The interval 27 to 58 (GTLQELRKREHYEKPSVKRKRKSEAARKRKKY) is disordered. The span at 31–42 (ELRKREHYEKPS) shows a compositional bias: basic and acidic residues. The span at 43–58 (VKRKRKSEAARKRKKY) shows a compositional bias: basic residues.

It belongs to the bacterial ribosomal protein bS21 family.

The protein is Small ribosomal subunit protein bS21 (rpsU) of Lactococcus lactis subsp. lactis (strain IL1403) (Streptococcus lactis).